Reading from the N-terminus, the 326-residue chain is Peroxidase 41 (326 aa).

The signal sequence occupies residues 1–20 (MSSVINVLFVVLVFVPSIYS). N-linked (GlcNAc...) asparagine glycosylation occurs at Asn25. Cystine bridges form between Cys35-Cys116, Cys68-Cys73, Cys122-Cys318, and Cys201-Cys228. His66 functions as the Proton acceptor in the catalytic mechanism. Residues Asp67, Gly72, Asp74, and Ser76 each contribute to the Ca(2+) site. Pro164 contributes to the substrate binding site. Asn167 is a glycosylation site (N-linked (GlcNAc...) asparagine). Heme b is bound at residue His194. Residue Thr195 coordinates Ca(2+). Residue Asn234 is glycosylated (N-linked (GlcNAc...) asparagine). Residues Asp242, Thr245, and Asp250 each coordinate Ca(2+). An N-linked (GlcNAc...) asparagine glycan is attached at Asn286.

It belongs to the peroxidase family. Classical plant (class III) peroxidase subfamily. The cofactor is heme b. Requires Ca(2+) as cofactor.

The protein resides in the secreted. It carries out the reaction 2 a phenolic donor + H2O2 = 2 a phenolic radical donor + 2 H2O. Its function is as follows. Removal of H(2)O(2), oxidation of toxic reductants, biosynthesis and degradation of lignin, suberization, auxin catabolism, response to environmental stresses such as wounding, pathogen attack and oxidative stress. These functions might be dependent on each isozyme/isoform in each plant tissue. This Arabidopsis thaliana (Mouse-ear cress) protein is Peroxidase 41 (PER41).